Here is a 131-residue protein sequence, read N- to C-terminus: Sec-independent protein translocase protein TatB (131 aa).

A helical membrane pass occupies residues 2–22 (LGSLSWEHMLVLVVVGLVVLG). A disordered region spans residues 96–131 (AFDRPVNGAAAQPPPAPAPPPEPHRPGQTPFDADAT). Residues 107–116 (QPPPAPAPPP) are compositionally biased toward pro residues.

This sequence belongs to the TatB family. In terms of assembly, the Tat system comprises two distinct complexes: a TatABC complex, containing multiple copies of TatA, TatB and TatC subunits, and a separate TatA complex, containing only TatA subunits. Substrates initially bind to the TatABC complex, which probably triggers association of the separate TatA complex to form the active translocon.

It is found in the cell membrane. Part of the twin-arginine translocation (Tat) system that transports large folded proteins containing a characteristic twin-arginine motif in their signal peptide across membranes. Together with TatC, TatB is part of a receptor directly interacting with Tat signal peptides. TatB may form an oligomeric binding site that transiently accommodates folded Tat precursor proteins before their translocation. This chain is Sec-independent protein translocase protein TatB, found in Mycobacterium avium (strain 104).